The sequence spans 27 residues: Potassium channel toxin alpha-KTx 9.11 (27 aa).

3 disulfides stabilise this stretch: Cys3-Cys19, Cys6-Cys23, and Cys10-Cys25.

Belongs to the short scorpion toxin superfamily. Potassium channel inhibitor family. Alpha-KTx 09 subfamily. As to expression, expressed by the venom gland.

It is found in the secreted. May play a role in blocking voltage-gated potassium channels Kv1.2/KCNA2, Kv1.3/KCNA3 and Kv1.6/KCNA6 to a lesser extent. This chain is Potassium channel toxin alpha-KTx 9.11, found in Mesobuthus gibbosus (Mediterranean checkered scorpion).